Here is a 592-residue protein sequence, read N- to C-terminus: Autophagy-related protein 22-1 (592 aa).

4 helical membrane passes run 31-51 (YGWAAEVFVVCAMGSFLPITL), 108-128 (TASFALYTFSLSVLVQAVIII), 143-163 (LLIVFAFIGSIATMLFLVVVP), and 167-187 (LLGGLLAIISNTCFGASFVLL). Asn-213 is a glycosylation site (N-linked (GlcNAc...) asparagine). 8 helical membrane passes run 271 to 291 (IGIGYIGAVILQVISILVVVV), 301 to 321 (LVLFLIGLWWFVFTIPASLWL), 364 to 384 (IVIFLAAWFLLSDGIATVSGT), 398 to 418 (AALGLINVIVMLAGVFGAFSW), 433 to 453 (IIACIILFELIPLYGLLGFIP), 468 to 490 (MYPLGALYGLVMGGLSSYCRSFF), 502 to 524 (FYALYAITDKGSSIFGPAIVGAI), and 534 to 554 (AFVFLAVLIFVPLPLMLLVDV). Residues 572 to 592 (PQGSEYGAISDDQTTEDPIEE) are disordered.

The protein belongs to the ATG22 family.

The protein localises to the vacuole membrane. Functionally, vacuolar effluxer which mediate the efflux of amino acids resulting from autophagic degradation. The release of autophagic amino acids allows the maintenance of protein synthesis and viability during nitrogen starvation. This is Autophagy-related protein 22-1 (atg22-1) from Penicillium rubens (strain ATCC 28089 / DSM 1075 / NRRL 1951 / Wisconsin 54-1255) (Penicillium chrysogenum).